A 226-amino-acid polypeptide reads, in one-letter code: uncharacterized protein (226 aa).

Disordered regions lie at residues 1–20 and 205–226; these read MGAERVGRAPGVNAKRAVQT and LDRKNTAIAQDKSERKKVQRDA.

This is an uncharacterized protein from Treponema pallidum (strain Nichols).